The primary structure comprises 181 residues: Thioredoxin-like protein CITRX1, chloroplastic (181 aa).

The segment at 1–20 (MQAATLSFHPSAPPPQTSAC) is disordered. Residues 1 to 70 (MQAATLSFHP…PAVATGKYVR (70 aa)) constitute a chloroplast transit peptide. One can recognise a Thioredoxin domain in the interval 71 to 181 (EDYLVKKVSA…MMRDIINNDL (111 aa)). Catalysis depends on nucleophile residues Cys104 and Cys107. A disulfide bridge connects residues Cys104 and Cys107.

Belongs to the thioredoxin family. Plant CITRX-type subfamily.

It localises to the plastid. It is found in the chloroplast. In terms of biological role, probable thiol-disulfide oxidoreductase that may play a role in proper chloroplast development. The chain is Thioredoxin-like protein CITRX1, chloroplastic from Nicotiana benthamiana.